The following is a 758-amino-acid chain: ATP-dependent RNA helicase dbp7 (758 aa).

Disordered stretches follow at residues 26 to 99 (GGTW…QPRQ) and 111 to 130 (PQKV…KPTN). Over residues 35 to 45 (AKKIAKHHAKG) the composition is skewed to basic residues. Residues 84–99 (GKQQSHTHPHSNQPRQ) are compositionally biased toward polar residues. The span at 111–127 (PQKVEEVKEEGHVEDAK) shows a compositional bias: basic and acidic residues. The Q motif signature appears at 138 to 167 (DTFTNLGLSPSLAAHLLTKLELKAPTAIQK). Residues 171 to 372 (SQLLKEEGDA…EISLKDAVHI (202 aa)) form the Helicase ATP-binding domain. 184-191 (AETGSGKT) is a binding site for ATP. The DEAD box motif lies at 308–311 (DEGD). The 206-residue stretch at 398–603 (QLKQSYAVVA…ALTRADANDI (206 aa)) folds into the Helicase C-terminal domain. Disordered stretches follow at residues 455-483 (KEDG…APAT) and 691-758 (VPGL…FNLA). The span at 696–709 (QGKEETKKDFKAER) shows a compositional bias: basic and acidic residues.

This sequence belongs to the DEAD box helicase family. DDX31/DBP7 subfamily.

The protein localises to the nucleus. It localises to the nucleolus. The catalysed reaction is ATP + H2O = ADP + phosphate + H(+). Its function is as follows. ATP-binding RNA helicase involved in the biogenesis of 60S ribosomal subunits and is required for the normal formation of 25S and 5.8S rRNAs. The sequence is that of ATP-dependent RNA helicase dbp7 (dbp7) from Neosartorya fischeri (strain ATCC 1020 / DSM 3700 / CBS 544.65 / FGSC A1164 / JCM 1740 / NRRL 181 / WB 181) (Aspergillus fischerianus).